Here is a 355-residue protein sequence, read N- to C-terminus: Glycerol-1-phosphate dehydrogenase [NAD(P)+] (355 aa).

NAD(+)-binding positions include 101 to 105 and 123 to 126; these read GKSID and TAAS. Asp128 is a binding site for substrate. Residue Ser132 coordinates NAD(+). Asp175 is a binding site for substrate. Zn(2+) is bound by residues Asp175 and His255. Residue His259 coordinates substrate. His271 serves as a coordination point for Zn(2+).

It belongs to the glycerol-1-phosphate dehydrogenase family. As to quaternary structure, homodimer. Zn(2+) is required as a cofactor.

It localises to the cytoplasm. It catalyses the reaction sn-glycerol 1-phosphate + NAD(+) = dihydroxyacetone phosphate + NADH + H(+). The enzyme catalyses sn-glycerol 1-phosphate + NADP(+) = dihydroxyacetone phosphate + NADPH + H(+). It participates in membrane lipid metabolism; glycerophospholipid metabolism. In terms of biological role, catalyzes the NAD(P)H-dependent reduction of dihydroxyacetonephosphate (DHAP or glycerone phosphate) to glycerol 1-phosphate (G1P). The G1P thus generated is used as the glycerophosphate backbone of phospholipids in the cellular membranes of Archaea. The protein is Glycerol-1-phosphate dehydrogenase [NAD(P)+] of Staphylothermus marinus (strain ATCC 43588 / DSM 3639 / JCM 9404 / F1).